The primary structure comprises 363 residues: Fructose-bisphosphate aldolase (363 aa).

2 residues coordinate substrate: arginine 56 and lysine 147. Glutamate 188 acts as the Proton acceptor in catalysis. Catalysis depends on lysine 230, which acts as the Schiff-base intermediate with dihydroxyacetone-P.

The protein belongs to the class I fructose-bisphosphate aldolase family.

The enzyme catalyses beta-D-fructose 1,6-bisphosphate = D-glyceraldehyde 3-phosphate + dihydroxyacetone phosphate. Its pathway is carbohydrate degradation; glycolysis; D-glyceraldehyde 3-phosphate and glycerone phosphate from D-glucose: step 4/4. This chain is Fructose-bisphosphate aldolase, found in Schistosoma mansoni (Blood fluke).